A 233-amino-acid chain; its full sequence is MITTRTARQCGQADYGWLQARYTFSFGHYFDPKLLGYASLRVLNQEVLAPGAAFQPRTYPKVDILNVILDGEAEYRDSEGNHVQASAGEALLLSTQPGVSYSEHNLSKDKPLTRMQLWLDACPQRENPLIQKLALNMGKQQLIASPEGAMGSLQLRQQVWLHHIVLDKGESANFQLHGPRAYLQSIHGKFHALTHHEEKAALTCGDGAFIRDEANITLVADSPLRALLIDLPV.

This sequence belongs to the pirin family. In terms of assembly, monomer.

Its subcellular location is the cytoplasm. Does not have quercetin 2,3-dioxygenase activity. The polypeptide is Pirin-like protein YhaK (yhaK) (Escherichia coli (strain K12)).